Reading from the N-terminus, the 274-residue chain is UPF0173 metal-dependent hydrolase Adeh_1068 (274 aa).

Belongs to the UPF0173 family.

The sequence is that of UPF0173 metal-dependent hydrolase Adeh_1068 from Anaeromyxobacter dehalogenans (strain 2CP-C).